We begin with the raw amino-acid sequence, 341 residues long: Uroporphyrinogen decarboxylase (341 aa).

Residues 23–27, D73, Y147, S202, and H318 contribute to the substrate site; that span reads RQAGR.

This sequence belongs to the uroporphyrinogen decarboxylase family. As to quaternary structure, homodimer.

The protein localises to the cytoplasm. It carries out the reaction uroporphyrinogen III + 4 H(+) = coproporphyrinogen III + 4 CO2. Its pathway is porphyrin-containing compound metabolism; protoporphyrin-IX biosynthesis; coproporphyrinogen-III from 5-aminolevulinate: step 4/4. Its function is as follows. Catalyzes the decarboxylation of four acetate groups of uroporphyrinogen-III to yield coproporphyrinogen-III. The sequence is that of Uroporphyrinogen decarboxylase from Novosphingobium aromaticivorans (strain ATCC 700278 / DSM 12444 / CCUG 56034 / CIP 105152 / NBRC 16084 / F199).